The following is a 321-amino-acid chain: Glucokinase (321 aa).

Residue 9–14 (ADIGGT) coordinates ATP.

It belongs to the bacterial glucokinase family.

It localises to the cytoplasm. The catalysed reaction is D-glucose + ATP = D-glucose 6-phosphate + ADP + H(+). This Saccharophagus degradans (strain 2-40 / ATCC 43961 / DSM 17024) protein is Glucokinase.